The following is a 312-amino-acid chain: Phospholipid phosphatase 3 (312 aa).

At 1–33 the chain is on the cytoplasmic side; the sequence is MQSYKYDKAIVPESKNGGSPALNNNPRKGGSKR. Serine 19 is subject to Phosphoserine. Residues 34–54 form a helical membrane-spanning segment; sequence VLLICLDLFCLFMAALPFLII. The Extracellular segment spans residues 55 to 85; that stretch reads ETSTIKPYRRGFYCNDESIKYPLKVSETIND. A helical membrane pass occupies residues 86–106; sequence AVLCAVGIVIAILAIITGEFY. Residues 107-123 lie on the Cytoplasmic side of the membrane; it reads RIYYLKEKSRSTTQNPY. The short motif at 109 to 110 is the Dityrosine basolateral targeting motif element; that stretch reads YY. The helical transmembrane segment at 124–144 threads the bilayer; that stretch reads VAALYKQVGCFLFGCAISQSF. Residues 145–194 are Extracellular-facing; the sequence is TDIAKVSIGRLRPHFLSVCDPDFSQINCSEGYIQNYRCRGEDSKVQEARK. The tract at residues 149-157 is phosphatase sequence motif I; sequence KVSIGRLRP. Residue asparagine 171 is glycosylated (N-linked (GlcNAc...) asparagine). The Integrin-binding motif signature appears at 183 to 185; that stretch reads RGE. Residues 195–215 traverse the membrane as a helical segment; sequence SFFSGHASFSMFTMLYLVLYL. The interval 197-200 is phosphatase sequence motif II; it reads FSGH. The active-site Proton donors is histidine 200. The Cytoplasmic segment spans residues 216-226; it reads QARFTWRGARL. Residues 227–244 form a helical membrane-spanning segment; sequence LRPLLQFTLLMMAFYTGL. Residues 245–256 are phosphatase sequence motif III; it reads SRVSDYKHHPSD. Over 245 to 258 the chain is Extracellular; sequence SRVSDYKHHPSDVL. Histidine 252 functions as the Nucleophile in the catalytic mechanism. A helical transmembrane segment spans residues 259–279; that stretch reads AGFAQGALVACCIVFFVSDLF. Residues 276–312 form a mediates interaction with CTNND1 region; sequence SDLFKTKTSLSLPAPAIRREILSPVDIIDRNNHHNMV. Residues 280-312 are Cytoplasmic-facing; sequence KTKTSLSLPAPAIRREILSPVDIIDRNNHHNMV.

Belongs to the PA-phosphatase related phosphoesterase family. Forms functional homodimers and homooligomers that are not required for substrate recognition and catalytic activity. Can also form heterooligomers with other PLPP2 and PLPP3. Interacts with CTNND1; negatively regulates the PLPP3-mediated stabilization of beta-catenin/CTNNB1. Post-translationally, N-glycosylated. Contains high-mannose oligosaccharides. Detected in lung, cerebellum and heart atrium.

It localises to the cell membrane. The protein localises to the basolateral cell membrane. Its subcellular location is the endoplasmic reticulum membrane. It is found in the endoplasmic reticulum-Golgi intermediate compartment membrane. The protein resides in the golgi apparatus membrane. It localises to the golgi apparatus. The protein localises to the trans-Golgi network membrane. Its subcellular location is the membrane raft. It carries out the reaction a 1,2-diacyl-sn-glycero-3-phosphate + H2O = a 1,2-diacyl-sn-glycerol + phosphate. The enzyme catalyses 1,2-dihexadecanoyl-sn-glycero-3-phosphate + H2O = 1,2-dihexadecanoyl-sn-glycerol + phosphate. It catalyses the reaction 1,2-di-(9Z-octadecenoyl)-sn-glycero-3-phosphate + H2O = 1,2-di-(9Z-octadecenoyl)-sn-glycerol + phosphate. The catalysed reaction is a monoacyl-sn-glycero-3-phosphate + H2O = a monoacylglycerol + phosphate. It carries out the reaction (9Z)-octadecenoyl-sn-glycero-3-phosphate + H2O = (9Z-octadecenoyl)-glycerol + phosphate. The enzyme catalyses sphing-4-enine 1-phosphate + H2O = sphing-4-enine + phosphate. It catalyses the reaction an N-acylsphing-4-enine 1-phosphate + H2O = an N-acylsphing-4-enine + phosphate. The catalysed reaction is N-(octanoyl)-sphing-4-enine-1-phosphate + H2O = N-octanoylsphing-4-enine + phosphate. It carries out the reaction N-(9Z-octadecenoyl)-ethanolamine phosphate + H2O = N-(9Z-octadecenoyl) ethanolamine + phosphate. It participates in lipid metabolism; phospholipid metabolism. Magnesium-independent phospholipid phosphatase. Insensitive to N-ethylmaleimide. Magnesium-independent phospholipid phosphatase of the plasma membrane that catalyzes the dephosphorylation of a variety of glycerolipid and sphingolipid phosphate esters including phosphatidate/PA, lysophosphatidate/LPA, diacylglycerol pyrophosphate/DGPP, sphingosine 1-phosphate/S1P and ceramide 1-phosphate/C1P. Also acts on N-oleoyl ethanolamine phosphate/N-(9Z-octadecenoyl)-ethanolamine phosphate, a potential physiological compound. Has both an extracellular and an intracellular phosphatase activity, allowing the hydrolysis and the cellular uptake of these bioactive lipid mediators from the milieu, regulating signal transduction in different cellular processes. Through the dephosphorylation of extracellular sphingosine-1-phosphate and the regulation of its extra- and intracellular availability, plays a role in vascular homeostasis, regulating endothelial cell migration, adhesion, survival, proliferation and the production of pro-inflammatory cytokines. By maintaining the appropriate levels of this lipid in the cerebellum, also ensure its proper development and function. Through its intracellular lipid phosphatase activity may act in early compartments of the secretory pathway, regulating the formation of Golgi to endoplasmic reticulum retrograde transport carriers. Its function is as follows. Independently of this phosphatase activity may also function in the Wnt signaling pathway and the stabilization of beta-catenin/CTNNB1, thereby regulating cell proliferation, migration and differentiation in angiogenesis or yet in tumor growth. Also plays a role in integrin-mediated cell-cell adhesion in angiogenesis. This is Phospholipid phosphatase 3 from Mus musculus (Mouse).